A 624-amino-acid polypeptide reads, in one-letter code: Glyco-Gag protein (624 aa).

Topologically, residues 1-63 are cytoplasmic; sequence LGDVPGTSGA…FLPSVWNRSR (63 aa). Residues 64 to 86 traverse the membrane as a helical segment; the sequence is AARLVCCSIVLCCLCLAVFLYWS. The Extracellular segment spans residues 87 to 624; that stretch reads ENMGQTVTTP…PQTSLLALDD (538 aa). N-linked (GlcNAc...) asparagine; by host glycosylation is present at N113. 2 stretches are compositionally biased toward pro residues: residues 200 to 209 and 247 to 258; these read PSLLPEPPLS and DPPPYRDPGPPP. 2 disordered regions span residues 200 to 284 and 290 to 309; these read PSLL…ASRL and LPVA…GGNG. N478 carries an N-linked (GlcNAc...) asparagine; by host glycan. Composition is skewed to basic and acidic residues over residues 520–552 and 572–605; these read RETP…EKER and KQDR…DCPK. The disordered stretch occupies residues 520–624; it reads RETPEEREER…PQTSLLALDD (105 aa).

In terms of processing, glycosylated by host. Cleaved by host near the middle of the molecule, releasing the c-terminal half containing capsid and nucleoprotein domains op GAG.

It is found in the host cell membrane. Its function is as follows. Plays a role in viral particle release. Presumably acts by facilitating the fission of the virion bud at the cell surface. May prevent the antiviral activity of murine APOBEC3. This chain is Glyco-Gag protein, found in Mus musculus (Mouse).